The chain runs to 367 residues: Probable butyrate kinase (367 aa).

It belongs to the acetokinase family.

The protein localises to the cytoplasm. It catalyses the reaction butanoate + ATP = butanoyl phosphate + ADP. The polypeptide is Probable butyrate kinase (Bacillus anthracis (strain A0248)).